The sequence spans 3038 residues: Lovastatin nonaketide synthase, polyketide synthase component (3038 aa).

Positions 8 to 447 (NEPIVVVGSG…GTNAHAIIEE (440 aa)) constitute a Ketosynthase family 3 (KS3) domain. Active-site for beta-ketoacyl synthase activity residues include Cys-181, His-320, and His-367. The tract at residues 562–889 (IFTGQGAQWP…GKNDLDTFSR (328 aa)) is malonyl-CoA:ACP transacylase (MAT) domain. Residue Ser-656 is the For malonyltransferase activity of the active site. Residues 695 to 757 (AMLAAGMSFE…DESTFARLLR (63 aa)) are lovC-binding. Residues 953 to 1089 (HLLLGKLSEY…GQLALMIGDV (137 aa)) are N-terminal hotdog fold. Residues 953-1263 (HLLLGKLSEY…ENITFKPFSP (311 aa)) form a dehydratase (DH) domain region. The 315-residue stretch at 953-1267 (HLLLGKLSEY…FKPFSPPDAS (315 aa)) folds into the PKS/mFAS DH domain. The Proton acceptor; for dehydratase activity role is filled by His-985. The tract at residues 1107–1267 (EEHPHMNRVN…FKPFSPPDAS (161 aa)) is C-terminal hotdog fold. The active-site Proton donor; for dehydratase activity is the Asp-1174. Residues 1443–1543 (LEIGAGTGGA…ARSLLKPGGQ (101 aa)) are methyltransferase (CMet) domain. The ketoreductase (KR) domain stretch occupies residues 2139-2437 (TLPTRVRSID…KIPEYRGAKA (299 aa)). The Carrier domain occupies 2463 to 2538 (QIVIDGLSAK…DLADEAAARL (76 aa)). Position 2498 is an O-(pantetheine 4'-phosphoryl)serine (Ser-2498). The interval 2546 to 2602 (VAATDGGAESTDNTSENEVSGREDTDLSAAATITEPSSADEDDTEPGDEDVPRSHHP) is disordered. A compositionally biased stretch (acidic residues) spans 2583 to 2594 (SADEDDTEPGDE). Residues 2602-2952 (PLSLGQEYSW…PTSNQPAPLL (351 aa)) form an inactive Condensation domain region.

In terms of assembly, homodimer. Each MAT domain from the lovB homodimer binds one lovC molecule to form the final active lovB-lovC megasynthase complex. Pantetheine 4'-phosphate is required as a cofactor.

It catalyses the reaction holo-[lovastatin nonaketide synthase] + 9 malonyl-CoA + S-adenosyl-L-methionine + 11 NADPH + 19 H(+) = dihydromonacolin L-[lovastatin nonaketide synthase] + S-adenosyl-L-homocysteine + 9 CO2 + 11 NADP(+) + 9 CoA + 6 H2O. It functions in the pathway polyketide biosynthesis; lovastatin biosynthesis. Functionally, lovastatin nonaketide synthase; part of the gene cluster that mediates the biosynthesis of lovastatin (also known as mevinolin, mevacor or monacolin K), a hypolipidemic inhibitor of (3S)-hydroxymethylglutaryl-coenzyme A (HMG-CoA) reductase (HMGR). The first step in the biosynthesis of lovastatin is the production of dihydromonacolin L acid by the lovastatin nonaketide synthase lovB and the trans-acting enoyl reductase lovC (called the lovB-lovC megasynthase complex) via condensation of one acetyl-CoA unit and 8 malonyl-CoA units. Dihydromonacolin L acid is released from lovB by the thioesterase lovG. Next, dihydromonacolin L acid is oxidized by the dihydromonacolin L monooxygenase lovA twice to form monacolin J acid. The 2-methylbutyrate moiety of lovastatin is synthesized by the lovastatin diketide synthase lovF via condensation of one acetyl-CoA unit and one malonyl-CoA unit. Finally, the covalent attachment of this moiety to monacolin J acid is catalyzed by the transesterase lovD to yield lovastatin. LovD has broad substrate specificity and can also convert monacolin J to simvastatin using alpha-dimethylbutanoyl-S-methyl-3-mercaptopropionate (DMB-S-MMP) as the thioester acyl donor, and can also catalyze the reverse reaction and function as hydrolase in vitro. LovD has much higher activity with LovF-bound 2-methylbutanoate than with free diketide substrates. The protein is Lovastatin nonaketide synthase, polyketide synthase component (lovB) of Aspergillus terreus (strain NIH 2624 / FGSC A1156).